The sequence spans 465 residues: Argininosuccinate lyase (465 aa).

The protein belongs to the lyase 1 family. Argininosuccinate lyase subfamily.

The protein localises to the cytoplasm. The enzyme catalyses 2-(N(omega)-L-arginino)succinate = fumarate + L-arginine. The protein operates within amino-acid biosynthesis; L-arginine biosynthesis; L-arginine from L-ornithine and carbamoyl phosphate: step 3/3. The polypeptide is Argininosuccinate lyase (Halorhodospira halophila (strain DSM 244 / SL1) (Ectothiorhodospira halophila (strain DSM 244 / SL1))).